We begin with the raw amino-acid sequence, 137 residues long: Putative pre-16S rRNA nuclease (137 aa).

The protein belongs to the YqgF nuclease family.

The protein localises to the cytoplasm. Could be a nuclease involved in processing of the 5'-end of pre-16S rRNA. This is Putative pre-16S rRNA nuclease from Actinobacillus pleuropneumoniae serotype 5b (strain L20).